The following is a 185-amino-acid chain: Dual-action ribosomal maturation protein DarP (185 aa).

The protein belongs to the DarP family.

It localises to the cytoplasm. Member of a network of 50S ribosomal subunit biogenesis factors which assembles along the 30S-50S interface, preventing incorrect 23S rRNA structures from forming. Promotes peptidyl transferase center (PTC) maturation. This chain is Dual-action ribosomal maturation protein DarP, found in Vibrio vulnificus (strain YJ016).